The primary structure comprises 294 residues: Phosphoribosylaminoimidazole-succinocarboxamide synthase (294 aa).

The protein belongs to the SAICAR synthetase family.

It catalyses the reaction 5-amino-1-(5-phospho-D-ribosyl)imidazole-4-carboxylate + L-aspartate + ATP = (2S)-2-[5-amino-1-(5-phospho-beta-D-ribosyl)imidazole-4-carboxamido]succinate + ADP + phosphate + 2 H(+). The protein operates within purine metabolism; IMP biosynthesis via de novo pathway; 5-amino-1-(5-phospho-D-ribosyl)imidazole-4-carboxamide from 5-amino-1-(5-phospho-D-ribosyl)imidazole-4-carboxylate: step 1/2. This chain is Phosphoribosylaminoimidazole-succinocarboxamide synthase, found in Rhodococcus opacus (strain B4).